A 512-amino-acid polypeptide reads, in one-letter code: Glycine betaine transporter OpuD (512 aa).

Helical transmembrane passes span 5 to 25 (ISSV…WGVI), 45 to 65 (FGWY…FLIF), 82 to 102 (FGLL…GLVF), 135 to 155 (FFHW…CIAY), 186 to 206 (IDCI…GLGA), 222 to 242 (AFIV…LSAW), 257 to 277 (MVLA…VLIM), 312 to 332 (WTIF…IFIA), 343 to 363 (FLIG…SIFG), 395 to 415 (LTMV…ITSA), 441 to 461 (WGII…LAAL), and 464 to 484 (TAIL…ASLY).

This sequence belongs to the BCCT transporter (TC 2.A.15) family.

The protein resides in the cell membrane. Its activity is regulated as follows. Activity is stimulated by high osmolarity. Its function is as follows. High-affinity uptake of glycine betaine. Does not mediate either carnitine or choline uptake. The sequence is that of Glycine betaine transporter OpuD (opuD) from Bacillus subtilis (strain 168).